Here is a 261-residue protein sequence, read N- to C-terminus: Tryptophan synthase alpha chain (261 aa).

Residues Glu-49 and Asp-60 each act as proton acceptor in the active site.

The protein belongs to the TrpA family. In terms of assembly, tetramer of two alpha and two beta chains.

The enzyme catalyses (1S,2R)-1-C-(indol-3-yl)glycerol 3-phosphate + L-serine = D-glyceraldehyde 3-phosphate + L-tryptophan + H2O. The protein operates within amino-acid biosynthesis; L-tryptophan biosynthesis; L-tryptophan from chorismate: step 5/5. The alpha subunit is responsible for the aldol cleavage of indoleglycerol phosphate to indole and glyceraldehyde 3-phosphate. This is Tryptophan synthase alpha chain from Roseiflexus castenholzii (strain DSM 13941 / HLO8).